A 269-amino-acid chain; its full sequence is Ubiquinone/menaquinone biosynthesis C-methyltransferase UbiE (269 aa).

S-adenosyl-L-methionine contacts are provided by residues T92, D113, and 141–142; that span reads NA.

Belongs to the class I-like SAM-binding methyltransferase superfamily. MenG/UbiE family.

The catalysed reaction is a 2-demethylmenaquinol + S-adenosyl-L-methionine = a menaquinol + S-adenosyl-L-homocysteine + H(+). The enzyme catalyses a 2-methoxy-6-(all-trans-polyprenyl)benzene-1,4-diol + S-adenosyl-L-methionine = a 5-methoxy-2-methyl-3-(all-trans-polyprenyl)benzene-1,4-diol + S-adenosyl-L-homocysteine + H(+). Its pathway is quinol/quinone metabolism; menaquinone biosynthesis; menaquinol from 1,4-dihydroxy-2-naphthoate: step 2/2. The protein operates within cofactor biosynthesis; ubiquinone biosynthesis. Its function is as follows. Methyltransferase required for the conversion of demethylmenaquinol (DMKH2) to menaquinol (MKH2) and the conversion of 2-polyprenyl-6-methoxy-1,4-benzoquinol (DDMQH2) to 2-polyprenyl-3-methyl-6-methoxy-1,4-benzoquinol (DMQH2). The chain is Ubiquinone/menaquinone biosynthesis C-methyltransferase UbiE from Brucella canis (strain ATCC 23365 / NCTC 10854 / RM-666).